The following is a 280-amino-acid chain: NAD kinase (280 aa).

Residue Asp-67 is the Proton acceptor of the active site. NAD(+) is bound by residues 67 to 68 (DG), Arg-72, 138 to 139 (ND), Asp-167, Ala-175, 178 to 183 (TAYSLS), and Gln-237.

It belongs to the NAD kinase family. It depends on a divalent metal cation as a cofactor.

It is found in the cytoplasm. It catalyses the reaction NAD(+) + ATP = ADP + NADP(+) + H(+). In terms of biological role, involved in the regulation of the intracellular balance of NAD and NADP, and is a key enzyme in the biosynthesis of NADP. Catalyzes specifically the phosphorylation on 2'-hydroxyl of the adenosine moiety of NAD to yield NADP. This is NAD kinase from Aeropyrum pernix (strain ATCC 700893 / DSM 11879 / JCM 9820 / NBRC 100138 / K1).